The following is a 348-amino-acid chain: Holliday junction branch migration complex subunit RuvB (348 aa).

A large ATPase domain (RuvB-L) region spans residues 1-183 (MAPQPRRLIA…FGIPIRLEYY (183 aa)). ATP-binding positions include Leu22, Arg23, Gly64, Lys67, Thr68, Thr69, 130–132 (EDF), Arg173, Tyr183, and Arg220. A Mg(2+)-binding site is contributed by Thr68. A small ATPAse domain (RuvB-S) region spans residues 184-254 (TVEELECIVR…VADRALRLLD (71 aa)). The head domain (RuvB-H) stretch occupies residues 257 to 348 (HIGLDQMDRR…FQLFSEGGEE (92 aa)). 3 residues coordinate DNA: Arg293, Arg312, and Arg317.

It belongs to the RuvB family. In terms of assembly, homohexamer. Forms an RuvA(8)-RuvB(12)-Holliday junction (HJ) complex. HJ DNA is sandwiched between 2 RuvA tetramers; dsDNA enters through RuvA and exits via RuvB. An RuvB hexamer assembles on each DNA strand where it exits the tetramer. Each RuvB hexamer is contacted by two RuvA subunits (via domain III) on 2 adjacent RuvB subunits; this complex drives branch migration. In the full resolvosome a probable DNA-RuvA(4)-RuvB(12)-RuvC(2) complex forms which resolves the HJ.

The protein resides in the cytoplasm. It carries out the reaction ATP + H2O = ADP + phosphate + H(+). In terms of biological role, the RuvA-RuvB-RuvC complex processes Holliday junction (HJ) DNA during genetic recombination and DNA repair, while the RuvA-RuvB complex plays an important role in the rescue of blocked DNA replication forks via replication fork reversal (RFR). RuvA specifically binds to HJ cruciform DNA, conferring on it an open structure. The RuvB hexamer acts as an ATP-dependent pump, pulling dsDNA into and through the RuvAB complex. RuvB forms 2 homohexamers on either side of HJ DNA bound by 1 or 2 RuvA tetramers; 4 subunits per hexamer contact DNA at a time. Coordinated motions by a converter formed by DNA-disengaged RuvB subunits stimulates ATP hydrolysis and nucleotide exchange. Immobilization of the converter enables RuvB to convert the ATP-contained energy into a lever motion, pulling 2 nucleotides of DNA out of the RuvA tetramer per ATP hydrolyzed, thus driving DNA branch migration. The RuvB motors rotate together with the DNA substrate, which together with the progressing nucleotide cycle form the mechanistic basis for DNA recombination by continuous HJ branch migration. Branch migration allows RuvC to scan DNA until it finds its consensus sequence, where it cleaves and resolves cruciform DNA. This is Holliday junction branch migration complex subunit RuvB from Methylocella silvestris (strain DSM 15510 / CIP 108128 / LMG 27833 / NCIMB 13906 / BL2).